A 482-amino-acid polypeptide reads, in one-letter code: BTB/POZ domain and ankyrin repeat-containing protein NOOT1 (482 aa).

A BTB domain is found at 25–107 (SDVVFSVEGR…LYSGQVSIVP (83 aa)). The C2HC NPR-type zinc-finger motif lies at 113-127 (RPNCGDRGCWHTHCT). Zn(2+)-binding residues include C116, C121, H123, and C126. ANK repeat units lie at residues 249 to 278 (QKIR…LNLD), 279 to 308 (EALA…DVNF), 313 to 342 (TGKT…DPNV), and 346 to 380 (DGVT…KLRL). The segment at 395–434 (EEGNNNNSNNNNNATASSATNMYPHHNMNEDHHHSHNNNN) is disordered. A compositionally biased stretch (low complexity) spans 398–415 (NNNNSNNNNNATASSATN).

It belongs to the plant 'ANKYRIN-BTB/POZ' family. 'NOOT-BOP-COCH-like' (NBCL) subfamily. As to quaternary structure, homodimer. As to expression, expressed in the shoot apical meristem (SAM) at the base of the developing leaf where stipules are formed. Associated with functional and vestigial abscission zones (AZs), including pulvini.

It is found in the nucleus. The protein resides in the cytoplasm. Its subcellular location is the cell membrane. It participates in protein modification; protein ubiquitination. May act as a substrate-specific adapter of an E3 ubiquitin-protein ligase complex (CUL3-RBX1-BTB) which mediates the ubiquitination and subsequent proteasomal degradation of target proteins. Transcriptional co-regulator involved in the promotion of leaf and floral meristem fate and determinacy. Promotes normal stipule growth and development. Required for the abscission of senescent organs, probably by regulating the cell wall disorganization in abscission zones (AZs, e.g. pulvini at the base of leaves). Involved in the coordination of the symbiotic nodule developmental program. Promotes the formation of root nodules by interacting directly with APP1 to modulate the expression of the nuclear transcription factor Y subunit (NF-YA1), a key nodulin. Necessary for the robust maintenance of nodule identity throughout the nodule developmental program. Involved in the regulation of indeterminate nodule identity in association with NOOT2. In Medicago truncatula (Barrel medic), this protein is BTB/POZ domain and ankyrin repeat-containing protein NOOT1.